Here is a 267-residue protein sequence, read N- to C-terminus: Hydroxyethylthiazole kinase (267 aa).

Methionine 49 serves as a coordination point for substrate. Positions 124 and 170 each coordinate ATP. A substrate-binding site is contributed by glycine 197.

It belongs to the Thz kinase family. Requires Mg(2+) as cofactor.

It catalyses the reaction 5-(2-hydroxyethyl)-4-methylthiazole + ATP = 4-methyl-5-(2-phosphooxyethyl)-thiazole + ADP + H(+). It participates in cofactor biosynthesis; thiamine diphosphate biosynthesis; 4-methyl-5-(2-phosphoethyl)-thiazole from 5-(2-hydroxyethyl)-4-methylthiazole: step 1/1. In terms of biological role, catalyzes the phosphorylation of the hydroxyl group of 4-methyl-5-beta-hydroxyethylthiazole (THZ). The chain is Hydroxyethylthiazole kinase from Tolumonas auensis (strain DSM 9187 / NBRC 110442 / TA 4).